Here is a 274-residue protein sequence, read N- to C-terminus: Light-independent protochlorophyllide reductase iron-sulfur ATP-binding protein (274 aa).

ATP contacts are provided by residues 12-17 and Lys-41; that span reads GIGKST. Residue Ser-16 participates in Mg(2+) binding. [4Fe-4S] cluster-binding residues include Cys-97 and Cys-131.

The protein belongs to the NifH/BchL/ChlL family. As to quaternary structure, homodimer. Protochlorophyllide reductase is composed of three subunits; BchL, BchN and BchB. [4Fe-4S] cluster serves as cofactor.

The catalysed reaction is chlorophyllide a + oxidized 2[4Fe-4S]-[ferredoxin] + 2 ADP + 2 phosphate = protochlorophyllide a + reduced 2[4Fe-4S]-[ferredoxin] + 2 ATP + 2 H2O. Its pathway is porphyrin-containing compound metabolism; bacteriochlorophyll biosynthesis (light-independent). In terms of biological role, component of the dark-operative protochlorophyllide reductase (DPOR) that uses Mg-ATP and reduced ferredoxin to reduce ring D of protochlorophyllide (Pchlide) to form chlorophyllide a (Chlide). This reaction is light-independent. The L component serves as a unique electron donor to the NB-component of the complex, and binds Mg-ATP. This chain is Light-independent protochlorophyllide reductase iron-sulfur ATP-binding protein, found in Chloroherpeton thalassium (strain ATCC 35110 / GB-78).